We begin with the raw amino-acid sequence, 239 residues long: Ribosomal RNA small subunit methyltransferase G (239 aa).

S-adenosyl-L-methionine is bound by residues G79, F84, 130–131 (AE), and R149.

The protein belongs to the methyltransferase superfamily. RNA methyltransferase RsmG family.

It localises to the cytoplasm. Functionally, specifically methylates the N7 position of a guanine in 16S rRNA. This Pelotomaculum thermopropionicum (strain DSM 13744 / JCM 10971 / SI) protein is Ribosomal RNA small subunit methyltransferase G.